A 180-amino-acid polypeptide reads, in one-letter code: Nucleoside triphosphate/diphosphate phosphatase (180 aa).

Arginine 26 acts as the Proton donor in catalysis. The Mg(2+) site is built by asparagine 90, aspartate 106, aspartate 108, aspartate 110, aspartate 123, and glutamate 126.

This sequence belongs to the Ntdp family. Mg(2+) is required as a cofactor.

It catalyses the reaction a ribonucleoside 5'-triphosphate + H2O = a ribonucleoside 5'-diphosphate + phosphate + H(+). The catalysed reaction is a ribonucleoside 5'-diphosphate + H2O = a ribonucleoside 5'-phosphate + phosphate + H(+). Has nucleoside phosphatase activity towards nucleoside triphosphates and nucleoside diphosphates. This Staphylococcus aureus (strain Mu3 / ATCC 700698) protein is Nucleoside triphosphate/diphosphate phosphatase.